The following is a 491-amino-acid chain: MKAFIWTLSVLFFLLMGIGHGRGRQFKIKKITQRRYPRATDGKEDAKKCSYTFLVPEQKITGPICVNTKGQDAGTIKDMITRMDLENLKDVLSKQKREIDVLQLVVDVDGNIVNEVKLLRKESRNMNSRVTQLYMQLLHEIIRKRDNSLELSQLENKILNVTTEMLKMATRYRELEVKYASLTDLVNNQSVMITLLEEQCLRIFSRQDPHVSPPLVQVVPQHIPNSHQYTPGLLGGNEIQRDPGYPRDLMPPPDLVTSPTKSPLKIPPVTFINEGPYKDCQHAKDAGHSVSGIYMIKPENSNGPMQLWCENSLDPGGWTVIQKRTDGSVNFFRNWENYKKGFGNIDGEYWLGLENIYLLSNQDNYKLLIELEDWSDKKVYAEYSSFRLEPESEFYRLRLGTYQGNAGDSMMWHNGKQFTTLDRDKDMYAGNCAHFHKGGWWYNACAHSNLNGVWYRGGHYRSKYQDGIFWAEYRGGSYSLRAVQMLIKPID.

A signal peptide spans 1 to 23 (MKAFIWTLSVLFFLLMGIGHGRG). A coiled-coil region spans residues 80 to 168 (ITRMDLENLK…LNVTTEMLKM (89 aa)). 2 N-linked (GlcNAc...) asparagine glycosylation sites follow: asparagine 160 and asparagine 188. The Fibrinogen C-terminal domain occupies 271–491 (FINEGPYKDC…AVQMLIKPID (221 aa)). 2 disulfides stabilise this stretch: cysteine 280/cysteine 309 and cysteine 432/cysteine 445.

Its subcellular location is the secreted. The chain is Angiopoietin-related protein 1 (ANGPTL1) from Bos taurus (Bovine).